The following is a 75-amino-acid chain: uncharacterized protein (75 aa).

Positions 1-14 (MNDNNDNNNNNKNI) are enriched in low complexity. The segment at 1–30 (MNDNNDNNNNNKNIDNVDDDNDDNDKGKYK) is disordered.

This is an uncharacterized protein from Dictyostelium discoideum (Social amoeba).